The following is a 132-amino-acid chain: Translation initiation factor 5A (132 aa).

Hypusine is present on Lys36.

Belongs to the eIF-5A family.

The protein resides in the cytoplasm. Its function is as follows. Functions by promoting the formation of the first peptide bond. The chain is Translation initiation factor 5A (eIF5A) from Pyrobaculum islandicum (strain DSM 4184 / JCM 9189 / GEO3).